Here is a 314-residue protein sequence, read N- to C-terminus: Zinc transporter ZIP3 (314 aa).

Topologically, residues 1–3 (MNL) are extracellular. A helical membrane pass occupies residues 4-24 (IFAKVLCLLAILVLMMLGSLI). Residues 25–41 (PVKISEADFDKSSRSRK) are Cytoplasmic-facing. The chain crosses the membrane as a helical span at residues 42 to 62 (ILSLSNSFAGGVFLATCFNAL). Over 63–84 (LPAVREKFFDLLKIGNISTDYP) the chain is Extracellular. Residues 85-105 (LAETIMMVGFFLTVFVEQTVM) traverse the membrane as a helical segment. Residues 106–169 (TFRKEKPSFI…KELSSSSPIR (64 aa)) lie on the Cytoplasmic side of the membrane. The chain crosses the membrane as a helical span at residues 170 to 190 (LFSLVFALSAHSVFEGLALGL). Over 191 to 196 (QEDGNK) the chain is Extracellular. Residues 197–217 (LLSLFIGVVIHETLVAMALGV) form a helical membrane-spanning segment. Over 218 to 229 (SMAKVNTHLKDA) the chain is Cytoplasmic. Residues 230 to 250 (IKMAVLVSTMIPIGIVVGMAI) traverse the membrane as a helical segment. The Extracellular portion of the chain corresponds to 251–262 (QSAQNMASSIAS). The chain crosses the membrane as a helical span at residues 263–283 (ALLQGIAGGTFIFVTFFEILV). At 284–292 (KELEEKNDR) the chain is on the cytoplasmic side. Residues 293–313 (LLKVLFLVLGYTVLAVLVLFK) traverse the membrane as a helical segment. Residue W314 is a topological domain, extracellular.

This sequence belongs to the ZIP transporter (TC 2.A.5) family.

It is found in the cell membrane. Its subcellular location is the apical cell membrane. It carries out the reaction Zn(2+)(in) = Zn(2+)(out). Its function is as follows. Transporter for the divalent cation Zn(2+). Mediates the influx of Zn(2+) into cells from extracellular space. This is Zinc transporter ZIP3 (slc39a3) from Xenopus tropicalis (Western clawed frog).